The chain runs to 331 residues: GTP 3',8-cyclase (331 aa).

The region spanning 9–233 is the Radical SAM core domain; sequence SFGRQVTYVR…TATNEHTGGP (225 aa). GTP is bound at residue Arg18. [4Fe-4S] cluster-binding residues include Cys25 and Cys29. Tyr31 serves as a coordination point for S-adenosyl-L-methionine. Cys32 is a [4Fe-4S] cluster binding site. Residue Arg67 participates in GTP binding. Position 71 (Gly71) interacts with S-adenosyl-L-methionine. Thr98 provides a ligand contact to GTP. Residue Ser122 participates in S-adenosyl-L-methionine binding. Lys159 lines the GTP pocket. Met193 lines the S-adenosyl-L-methionine pocket. [4Fe-4S] cluster contacts are provided by Cys257 and Cys260. A GTP-binding site is contributed by 262-264; it reads RVR. Cys274 contacts [4Fe-4S] cluster.

The protein belongs to the radical SAM superfamily. MoaA family. Monomer and homodimer. The cofactor is [4Fe-4S] cluster.

The catalysed reaction is GTP + AH2 + S-adenosyl-L-methionine = (8S)-3',8-cyclo-7,8-dihydroguanosine 5'-triphosphate + 5'-deoxyadenosine + L-methionine + A + H(+). It functions in the pathway cofactor biosynthesis; molybdopterin biosynthesis. Functionally, catalyzes the cyclization of GTP to (8S)-3',8-cyclo-7,8-dihydroguanosine 5'-triphosphate. This Saccharophagus degradans (strain 2-40 / ATCC 43961 / DSM 17024) protein is GTP 3',8-cyclase.